The primary structure comprises 449 residues: Adenylosuccinate synthetase (449 aa).

Residues 12 to 18 (GDEGKGK) and 40 to 42 (GHT) each bind GTP. Catalysis depends on Asp13, which acts as the Proton acceptor. 2 residues coordinate Mg(2+): Asp13 and Gly40. Residues 13–16 (DEGK), 38–41 (NAGH), Thr128, Arg142, Gln223, Thr238, and Arg302 contribute to the IMP site. His41 acts as the Proton donor in catalysis. Position 298-304 (298-304 (TTTGRRR)) interacts with substrate. Residues Arg304, 330 to 332 (KLD), and 412 to 414 (SLG) contribute to the GTP site.

It belongs to the adenylosuccinate synthetase family. Homodimer. Mg(2+) is required as a cofactor.

It is found in the cytoplasm. The catalysed reaction is IMP + L-aspartate + GTP = N(6)-(1,2-dicarboxyethyl)-AMP + GDP + phosphate + 2 H(+). It participates in purine metabolism; AMP biosynthesis via de novo pathway; AMP from IMP: step 1/2. Functionally, plays an important role in the de novo pathway of purine nucleotide biosynthesis. Catalyzes the first committed step in the biosynthesis of AMP from IMP. The chain is Adenylosuccinate synthetase from Gloeothece citriformis (strain PCC 7424) (Cyanothece sp. (strain PCC 7424)).